The sequence spans 428 residues: MFVDQTKIDVQAGKGGDGAVAFRHEKYVPLGGPAGGDGGRGGSIILVADSGLRTLMDFRFRRKFKADNGENGRIKSQYGRGAKDVRLKVPMGTSVYDFNTGELLGDLVENGQELVVAHGGKGGRGNIHFATPTRTAPEIAENGEPGEFRTLRLELKVLADVGLVGFPSVGKSTLLSVVTKAKPKIAAYEFTTLTPNLGMVVLPDGRDFSMADLPGLIEGASKGVGLGIQFLRHVERTKVILHLVSMDPNNGRDAYEDYETIRKELAGYTKDLTTKKEIIVATQMDIPGSEEKFAEFKKKLGDKTVYPISSVTHKGVSELMGKTADLVEEVAKEEAEKPAEIKVAEKEYVYKKPEDEGFKVERTGEHSFVVTGNKLERLVQRTNLDHTDGIMLLARKLKRLGVDEALRENGAVTGDDVSIADFTFEFVD.

The Obg domain occupies 1–158; it reads MFVDQTKIDV…RTLRLELKVL (158 aa). One can recognise an OBG-type G domain in the interval 159-328; sequence ADVGLVGFPS…LMGKTADLVE (170 aa). GTP contacts are provided by residues 165–172, 190–194, 212–215, 282–285, and 309–311; these read GFPSVGKS, FTTLT, DLPG, TQMD, and SSV. Mg(2+) is bound by residues Ser-172 and Thr-192. The OCT domain maps to 350–428; it reads YKKPEDEGFK…IADFTFEFVD (79 aa).

It belongs to the TRAFAC class OBG-HflX-like GTPase superfamily. OBG GTPase family. In terms of assembly, monomer. Mg(2+) is required as a cofactor.

It localises to the cytoplasm. Its function is as follows. An essential GTPase which binds GTP, GDP and possibly (p)ppGpp with moderate affinity, with high nucleotide exchange rates and a fairly low GTP hydrolysis rate. Plays a role in control of the cell cycle, stress response, ribosome biogenesis and in those bacteria that undergo differentiation, in morphogenesis control. This chain is GTPase Obg, found in Lactobacillus johnsonii (strain CNCM I-12250 / La1 / NCC 533).